The following is a 203-amino-acid chain: Synaptosomal-associated protein 25-B (203 aa).

Positions M1 to L11 are enriched in basic and acidic residues. The segment at M1–S25 is disordered. T-SNARE coiled-coil homology domains follow at residues D19–L81 and D137–M199.

Belongs to the SNAP-25 family.

It is found in the synapse. The protein resides in the synaptosome. Its subcellular location is the cell membrane. In terms of biological role, may play an important role in the synaptic function of specific neuronal systems. Associates with proteins involved in vesicle docking and membrane fusion. In Carassius auratus (Goldfish), this protein is Synaptosomal-associated protein 25-B (snap25b).